The following is a 58-amino-acid chain: ATP synthase F(0) complex subunit k, mitochondrial (58 aa).

An N6-acetyllysine mark is found at Lys16 and Lys17. Residues 23–45 (TLTGRMNCVLATYGGIALLVLYF) traverse the membrane as a helical segment.

Component of the ATP synthase complex composed at least of ATP5F1A/subunit alpha, ATP5F1B/subunit beta, ATP5MC1/subunit c (homooctomer), MT-ATP6/subunit a, MT-ATP8/subunit 8, ATP5ME/subunit e, ATP5MF/subunit f, ATP5MG/subunit g, ATP5MK/subunit k, ATP5MJ/subunit j, ATP5F1C/subunit gamma, ATP5F1D/subunit delta, ATP5F1E/subunit epsilon, ATP5PF/subunit F6, ATP5PB/subunit b, ATP5PD/subunit d, ATP5PO/subunit OSCP. ATP synthase complex consists of a soluble F(1) head domain (subunits alpha(3) and beta(3)) - the catalytic core - and a membrane F(0) domain - the membrane proton channel (subunits c, a, 8, e, f, g, k and j). These two domains are linked by a central stalk (subunits gamma, delta, and epsilon) rotating inside the F1 region and a stationary peripheral stalk (subunits F6, b, d, and OSCP). The ATP synthase complex/complex V exists as a monomeric and a dimeric supercomplex that helps shape mitochondrial cristae to optimize proton flow. In terms of tissue distribution, ubiquitous. Highly expressed in skeletal and cardiac muscle. Moderately expressed in brain, thymus, stomach and testis. Lowest expression levels were detected in lung, liver, kidney, adrenal gland, spleen, small intestine and adipose tissue. In streptozotocin-induced diabetes, the insulin-sensitive tissues skeletal and cardiac muscle were down-regulated.

Its subcellular location is the mitochondrion membrane. Functionally, subunit k, of the mitochondrial membrane ATP synthase complex (F(1)F(0) ATP synthase or Complex V) that produces ATP from ADP in the presence of a proton gradient across the membrane which is generated by electron transport complexes of the respiratory chain. ATP synthase complex consist of a soluble F(1) head domain - the catalytic core - and a membrane F(1) domain - the membrane proton channel. These two domains are linked by a central stalk rotating inside the F(1) region and a stationary peripheral stalk. During catalysis, ATP synthesis in the catalytic domain of F(1) is coupled via a rotary mechanism of the central stalk subunits to proton translocation. In vivo, can only synthesize ATP although its ATP hydrolase activity can be activated artificially in vitro. Part of the complex F(0) domain. Required for dimerization of the ATP synthase complex and as such regulates ATP synthesis in the mitochondria. In Rattus norvegicus (Rat), this protein is ATP synthase F(0) complex subunit k, mitochondrial (Atp5mk).